We begin with the raw amino-acid sequence, 315 residues long: N-acetyl-D-glutamate racemase (315 aa).

Aspartate 147, glutamate 173, and aspartate 196 together coordinate Mg(2+).

It belongs to the mandelate racemase/muconate lactonizing enzyme family. The cofactor is Mg(2+).

The enzyme catalyses N-acetyl-D-glutamate = N-acetyl-L-glutamate. It participates in amino-acid degradation. Racemase involved in a deamination-independent D-glutamate degradation pathway, named the DgcN-DgcA pathway. Catalyzes the conversion of N-acetyl-D-glutamate to N-acetyl-L-glutamate. Also shows racemase activity towards the dipeptide L-Ala-D-Glu, a key constituent of peptidoglycan muropeptides, suggesting that it may also contribute to the degradation of peptidoglycans. The sequence is that of N-acetyl-D-glutamate racemase from Pseudoalteromonas sp.